A 118-amino-acid polypeptide reads, in one-letter code: Probable FK506-binding protein (118 aa).

The PPIase FKBP-type domain occupies 33–118 (GGEVEVHYVG…LVFIIDLISA (86 aa)).

Belongs to the FKBP-type PPIase family.

It catalyses the reaction [protein]-peptidylproline (omega=180) = [protein]-peptidylproline (omega=0). Its function is as follows. PPIases accelerate the folding of proteins. This is Probable FK506-binding protein from Corynebacterium glutamicum (strain ATCC 13032 / DSM 20300 / JCM 1318 / BCRC 11384 / CCUG 27702 / LMG 3730 / NBRC 12168 / NCIMB 10025 / NRRL B-2784 / 534).